Here is a 334-residue protein sequence, read N- to C-terminus: Replication factor C small subunit (334 aa).

49–56 contributes to the ATP binding site; that stretch reads GPPGVGKT.

It belongs to the activator 1 small subunits family. RfcS subfamily. Heteromultimer composed of small subunits (RfcS) and large subunits (RfcL).

In terms of biological role, part of the RFC clamp loader complex which loads the PCNA sliding clamp onto DNA. The sequence is that of Replication factor C small subunit from Methanosarcina barkeri (strain Fusaro / DSM 804).